Reading from the N-terminus, the 563-residue chain is Sulfite reductase [NADPH] hemoprotein beta-component (563 aa).

Positions 427, 433, 472, and 476 each coordinate [4Fe-4S] cluster. Position 476 (C476) interacts with siroheme.

Belongs to the nitrite and sulfite reductase 4Fe-4S domain family. Alpha(8)-beta(8). The alpha component is a flavoprotein, the beta component is a hemoprotein. Siroheme is required as a cofactor. [4Fe-4S] cluster serves as cofactor.

The catalysed reaction is hydrogen sulfide + 3 NADP(+) + 3 H2O = sulfite + 3 NADPH + 4 H(+). It participates in sulfur metabolism; hydrogen sulfide biosynthesis; hydrogen sulfide from sulfite (NADPH route): step 1/1. Functionally, component of the sulfite reductase complex that catalyzes the 6-electron reduction of sulfite to sulfide. This is one of several activities required for the biosynthesis of L-cysteine from sulfate. The protein is Sulfite reductase [NADPH] hemoprotein beta-component of Acidithiobacillus ferrooxidans (strain ATCC 53993 / BNL-5-31) (Leptospirillum ferrooxidans (ATCC 53993)).